Here is a 115-residue protein sequence, read N- to C-terminus: Nucleoid-associated protein PMN2A_1347 (115 aa).

The disordered stretch occupies residues 89 to 115 (STSTMKERMEDLTGGFKLNLPGMGEEN).

The protein belongs to the YbaB/EbfC family. Homodimer.

The protein resides in the cytoplasm. It is found in the nucleoid. Its function is as follows. Binds to DNA and alters its conformation. May be involved in regulation of gene expression, nucleoid organization and DNA protection. The protein is Nucleoid-associated protein PMN2A_1347 of Prochlorococcus marinus (strain NATL2A).